The primary structure comprises 226 residues: Urease accessory protein UreF (226 aa).

It belongs to the UreF family. In terms of assembly, ureD, UreF and UreG form a complex that acts as a GTP-hydrolysis-dependent molecular chaperone, activating the urease apoprotein by helping to assemble the nickel containing metallocenter of UreC. The UreE protein probably delivers the nickel.

It is found in the cytoplasm. Functionally, required for maturation of urease via the functional incorporation of the urease nickel metallocenter. The polypeptide is Urease accessory protein UreF (Paraburkholderia phymatum (strain DSM 17167 / CIP 108236 / LMG 21445 / STM815) (Burkholderia phymatum)).